Here is a 128-residue protein sequence, read N- to C-terminus: Histone H2A (128 aa).

Belongs to the histone H2A family. In terms of assembly, the nucleosome is a histone octamer containing two molecules each of H2A, H2B, H3 and H4 assembled in one H3-H4 heterotetramer and two H2A-H2B heterodimers. The octamer wraps approximately 147 bp of DNA.

Its subcellular location is the nucleus. The protein localises to the chromosome. Functionally, core component of nucleosome. Nucleosomes wrap and compact DNA into chromatin, limiting DNA accessibility to the cellular machineries which require DNA as a template. Histones thereby play a central role in transcription regulation, DNA repair, DNA replication and chromosomal stability. DNA accessibility is regulated via a complex set of post-translational modifications of histones, also called histone code, and nucleosome remodeling. The chain is Histone H2A (HTA1) from Encephalitozoon cuniculi (strain GB-M1) (Microsporidian parasite).